Consider the following 317-residue polypeptide: N-acetylmuramoyl-L-alanine amidase XlyB (317 aa).

The N-terminal stretch at 1 to 39 (MSIPVKKNLVSEAKYALKCPNAMSAEYITIHNTANDASA) is a signal peptide. Residues 40–142 (ANEISYMIGN…QDWSGKYCPH (103 aa)) enclose the N-acetylmuramoyl-L-alanine amidase domain. One can recognise a LysM domain in the interval 177–221 (SEYHVKKGDTLSGIAASHGASVKTLQSINHITDPNHIKIGQVIKL).

Belongs to the N-acetylmuramoyl-L-alanine amidase 2 family.

The protein resides in the secreted. The enzyme catalyses Hydrolyzes the link between N-acetylmuramoyl residues and L-amino acid residues in certain cell-wall glycopeptides.. In terms of biological role, autolysins are involved in some important biological processes such as cell separation, cell-wall turnover, competence for genetic transformation, formation of the flagella and sporulation. This is N-acetylmuramoyl-L-alanine amidase XlyB (xlyB) from Bacillus subtilis (strain 168).